The primary structure comprises 100 residues: Large ribosomal subunit protein bL28 (100 aa).

The protein belongs to the bacterial ribosomal protein bL28 family.

In Ehrlichia ruminantium (strain Gardel), this protein is Large ribosomal subunit protein bL28.